The following is a 173-amino-acid chain: Ribosome maturation factor RimM (173 aa).

Positions 95–169 (PDEFYDHELE…TIVIDPPEGL (75 aa)) constitute a PRC barrel domain.

The protein belongs to the RimM family. In terms of assembly, binds ribosomal protein uS19.

The protein localises to the cytoplasm. Functionally, an accessory protein needed during the final step in the assembly of 30S ribosomal subunit, possibly for assembly of the head region. Essential for efficient processing of 16S rRNA. May be needed both before and after RbfA during the maturation of 16S rRNA. It has affinity for free ribosomal 30S subunits but not for 70S ribosomes. This Mycolicibacterium smegmatis (strain ATCC 700084 / mc(2)155) (Mycobacterium smegmatis) protein is Ribosome maturation factor RimM.